A 146-amino-acid polypeptide reads, in one-letter code: 1,4-dihydroxy-2-naphthoyl-CoA hydrolase (146 aa).

D19 is a catalytic residue.

This sequence belongs to the 4-hydroxybenzoyl-CoA thioesterase family. DHNA-CoA hydrolase subfamily.

It catalyses the reaction 1,4-dihydroxy-2-naphthoyl-CoA + H2O = 1,4-dihydroxy-2-naphthoate + CoA + H(+). Its pathway is cofactor biosynthesis; phylloquinone biosynthesis. It participates in quinol/quinone metabolism; 1,4-dihydroxy-2-naphthoate biosynthesis; 1,4-dihydroxy-2-naphthoate from chorismate: step 7/7. Functionally, catalyzes the hydrolysis of 1,4-dihydroxy-2-naphthoyl-CoA (DHNA-CoA) to 1,4-dihydroxy-2-naphthoate (DHNA), a reaction involved in phylloquinone (vitamin K1) biosynthesis. In Thermosynechococcus vestitus (strain NIES-2133 / IAM M-273 / BP-1), this protein is 1,4-dihydroxy-2-naphthoyl-CoA hydrolase.